A 467-amino-acid polypeptide reads, in one-letter code: Ribosomal protein uS12 methylthiotransferase RimO (467 aa).

The MTTase N-terminal domain occupies 1 to 110; the sequence is MDLHGCAKNQ…LPQLIDSMFP (110 aa). Cys6, Cys42, Cys73, Cys153, Cys157, and Cys160 together coordinate [4Fe-4S] cluster. Residues 139 to 386 form the Radical SAM core domain; it reads LNFPRSTYIK…QNAQTSITEK (248 aa). One can recognise a TRAM domain in the interval 389–467; the sequence is DSFIGKEIEV…NGFDLEAVAV (79 aa).

The protein belongs to the methylthiotransferase family. RimO subfamily. It depends on [4Fe-4S] cluster as a cofactor.

It localises to the cytoplasm. The catalysed reaction is L-aspartate(89)-[ribosomal protein uS12]-hydrogen + (sulfur carrier)-SH + AH2 + 2 S-adenosyl-L-methionine = 3-methylsulfanyl-L-aspartate(89)-[ribosomal protein uS12]-hydrogen + (sulfur carrier)-H + 5'-deoxyadenosine + L-methionine + A + S-adenosyl-L-homocysteine + 2 H(+). Its function is as follows. Catalyzes the methylthiolation of an aspartic acid residue of ribosomal protein uS12. This is Ribosomal protein uS12 methylthiotransferase RimO from Treponema denticola (strain ATCC 35405 / DSM 14222 / CIP 103919 / JCM 8153 / KCTC 15104).